Consider the following 137-residue polypeptide: Putative pre-16S rRNA nuclease (137 aa).

This sequence belongs to the YqgF nuclease family.

It localises to the cytoplasm. Functionally, could be a nuclease involved in processing of the 5'-end of pre-16S rRNA. This chain is Putative pre-16S rRNA nuclease, found in Anaeromyxobacter sp. (strain K).